Here is a 697-residue protein sequence, read N- to C-terminus: Elongation factor G 2 (697 aa).

The tr-type G domain occupies 6–281 (TNYRNFGIFA…AVVDFLPNPT (276 aa)). GTP-binding positions include 15 to 22 (AHVDAGKT), 79 to 83 (DTPGH), and 133 to 136 (NKLD).

It belongs to the TRAFAC class translation factor GTPase superfamily. Classic translation factor GTPase family. EF-G/EF-2 subfamily.

It localises to the cytoplasm. Functionally, catalyzes the GTP-dependent ribosomal translocation step during translation elongation. During this step, the ribosome changes from the pre-translocational (PRE) to the post-translocational (POST) state as the newly formed A-site-bound peptidyl-tRNA and P-site-bound deacylated tRNA move to the P and E sites, respectively. Catalyzes the coordinated movement of the two tRNA molecules, the mRNA and conformational changes in the ribosome. The chain is Elongation factor G 2 from Trichodesmium erythraeum (strain IMS101).